The chain runs to 152 residues: MEKKLSSENNQLSSEQILGLLPHRYPFALVDKVIEHIPGERAVAIKNVTINEPQFQGHFPERPLMPGVLIVESMAQVGGIIVTQMPDLPKGLFVFAGINNVKFRKPVLPGDQLIISCELLSIKRQRFGKVKGEAHVDGKLVCAGELMFSLVN.

Histidine 58 is an active-site residue.

This sequence belongs to the thioester dehydratase family. FabZ subfamily.

The protein localises to the cytoplasm. It catalyses the reaction a (3R)-hydroxyacyl-[ACP] = a (2E)-enoyl-[ACP] + H2O. Involved in unsaturated fatty acids biosynthesis. Catalyzes the dehydration of short chain beta-hydroxyacyl-ACPs and long chain saturated and unsaturated beta-hydroxyacyl-ACPs. This chain is 3-hydroxyacyl-[acyl-carrier-protein] dehydratase FabZ, found in Prochlorococcus marinus (strain MIT 9215).